A 254-amino-acid chain; its full sequence is Emerin (254 aa).

At Met-1 the chain carries N-acetylmethionine. The LEM domain maps to 1–45 (MDNYADLSDTELTTLLRRYNIPHGPVVGSTRRLYEKKIFEYETQR). Ser-8 and Ser-29 each carry phosphoserine. Residues 46 to 222 (RRLSPPSSSA…PGAGLGQDRQ (177 aa)) form an interaction with F-actin region. Ser-49 carries the post-translational modification Phosphoserine; by PKA. A phosphoserine mark is found at Ser-54, Ser-60, Ser-87, Ser-98, Ser-141, Ser-142, and Ser-143. Tyr-161 is subject to Phosphotyrosine. Positions 168–186 (RPVSASRSSLDLSYYPTSS) are interaction with CTNNB1. A phosphoserine mark is found at Ser-171, Ser-173, and Ser-175. A helical transmembrane segment spans residues 223-243 (VPLWGQLLLFLVFVIVLFFIY).

In terms of assembly, interacts with lamins A and C, BANF1, GMCL, BCLAF1 and YTHDC1/YT521. Interacts with TMEM43; the interaction retains emerin in the nuclear inner membrane. Interacts with SUN1 and SUN2. Interacts with ACTB, SPTAN1, F-actin, CTNNB1 and beta-tubulin. Interacts with TMEM201. Interacts with NEMP1. Post-translationally, found in four different phosphorylated forms, three of which appear to be associated with the cell cycle. In terms of tissue distribution, skeletal muscle, heart, colon, testis, ovary and pancreas.

Its subcellular location is the nucleus inner membrane. The protein resides in the nucleus outer membrane. In terms of biological role, stabilizes and promotes the formation of a nuclear actin cortical network. Stimulates actin polymerization in vitro by binding and stabilizing the pointed end of growing filaments. Inhibits beta-catenin activity by preventing its accumulation in the nucleus. Acts by influencing the nuclear accumulation of beta-catenin through a CRM1-dependent export pathway. Links centrosomes to the nuclear envelope via a microtubule association. Required for proper localization of non-farnesylated prelamin-A/C. Together with NEMP1, contributes to nuclear envelope stiffness in germ cells. EMD and BAF are cooperative cofactors of HIV-1 infection. Association of EMD with the viral DNA requires the presence of BAF and viral integrase. The association of viral DNA with chromatin requires the presence of BAF and EMD. In Homo sapiens (Human), this protein is Emerin (EMD).